The primary structure comprises 165 residues: Ubiquitin-fold modifier-conjugating enzyme 1 (165 aa).

The active-site Glycyl thioester intermediate is the cysteine 117.

Belongs to the ubiquitin-conjugating enzyme family. UFC1 subfamily.

Functionally, E2-like enzyme which forms an intermediate with UFM1 via a thioester linkage. In Brugia malayi (Filarial nematode worm), this protein is Ubiquitin-fold modifier-conjugating enzyme 1.